Reading from the N-terminus, the 71-residue chain is Protein SlyX homolog (71 aa).

Residues 49 to 71 (KIKESQSSSSMMSNEPEPPPPHY) are disordered.

This sequence belongs to the SlyX family.

This chain is Protein SlyX homolog, found in Pseudoalteromonas translucida (strain TAC 125).